A 126-amino-acid chain; its full sequence is Small ribosomal subunit protein uS13 (126 aa).

The disordered stretch occupies residues 94-126; sequence RNLPVHGQRTHTNARTRKGPRRAIAGKKKAGKK.

The protein belongs to the universal ribosomal protein uS13 family. Part of the 30S ribosomal subunit. Forms a loose heterodimer with protein S19. Forms two bridges to the 50S subunit in the 70S ribosome.

Its function is as follows. Located at the top of the head of the 30S subunit, it contacts several helices of the 16S rRNA. In the 70S ribosome it contacts the 23S rRNA (bridge B1a) and protein L5 of the 50S subunit (bridge B1b), connecting the 2 subunits; these bridges are implicated in subunit movement. Contacts the tRNAs in the A and P-sites. The sequence is that of Small ribosomal subunit protein uS13 from Parafrankia sp. (strain EAN1pec).